A 573-amino-acid chain; its full sequence is SHC-transforming protein 2 (573 aa).

The PID domain maps to 125–309; sequence LGPGVSYIVR…LEELAWGDDD (185 aa). Positions 310–477 are CH1; the sequence is AAADHNYYNS…PTEEQLRQEP (168 aa). Tyr316, Tyr317, and Tyr395 each carry phosphotyrosine. Residues 478–569 enclose the SH2 domain; that stretch reads WYHGRMSRRA…ESELHLRGVV (92 aa).

Interacts with the Trk receptors in a phosphotyrosine-dependent manner and MEGF12. Once activated, binds to GRB2. In terms of processing, phosphorylated on tyrosine by the Trk receptors. Expressed in brain. Expressed at high level in the hypothalamus and at low level in the caudate nucleus.

Its function is as follows. Signaling adapter that couples activated growth factor receptors to signaling pathway in neurons. Involved in the signal transduction pathways of neurotrophin-activated Trk receptors in cortical neurons. This is SHC-transforming protein 2 (Shc2) from Mus musculus (Mouse).